The following is a 248-amino-acid chain: Exosome complex component Rrp41 (248 aa).

It belongs to the RNase PH family. Rrp41 subfamily. In terms of assembly, component of the archaeal exosome complex. Forms a hexameric ring-like arrangement composed of 3 Rrp41-Rrp42 heterodimers. The hexameric ring associates with a trimer of Rrp4 and/or Csl4 subunits.

The protein localises to the cytoplasm. Its function is as follows. Catalytic component of the exosome, which is a complex involved in RNA degradation. Has 3'-&gt;5' exoribonuclease activity. Can also synthesize heteromeric RNA-tails. The polypeptide is Exosome complex component Rrp41 (Thermoplasma acidophilum (strain ATCC 25905 / DSM 1728 / JCM 9062 / NBRC 15155 / AMRC-C165)).